The sequence spans 101 residues: Small ribosomal subunit protein uS14 (101 aa).

It belongs to the universal ribosomal protein uS14 family. As to quaternary structure, part of the 30S ribosomal subunit. Contacts proteins S3 and S10.

Binds 16S rRNA, required for the assembly of 30S particles and may also be responsible for determining the conformation of the 16S rRNA at the A site. The sequence is that of Small ribosomal subunit protein uS14 from Pseudomonas aeruginosa (strain LESB58).